The following is a 227-amino-acid chain: Isopentenyl-diphosphate Delta-isomerase 1 (227 aa).

Lysine 36 contributes to the substrate binding site. 2 residues coordinate Mg(2+): histidine 40 and histidine 51. The Nudix hydrolase domain occupies 49-199 (LLHRAFSVFL…EIKITPWFQI (151 aa)). Substrate contacts are provided by arginine 70 and lysine 74. The active site involves cysteine 86. Serine 87 contacts substrate. Mg(2+) is bound by residues glutamate 146 and glutamate 148. Residue glutamate 148 is part of the active site. Lysine 176 carries the N6-acetyllysine modification. Residues 225–227 (HRM) carry the Microbody targeting signal motif.

It belongs to the IPP isomerase type 1 family. As to quaternary structure, monomer. The cofactor is Mg(2+).

The protein localises to the peroxisome. It catalyses the reaction isopentenyl diphosphate = dimethylallyl diphosphate. It functions in the pathway isoprenoid biosynthesis; dimethylallyl diphosphate biosynthesis; dimethylallyl diphosphate from isopentenyl diphosphate: step 1/1. Catalyzes the 1,3-allylic rearrangement of the homoallylic substrate isopentenyl (IPP) to its highly electrophilic allylic isomer, dimethylallyl diphosphate (DMAPP). The polypeptide is Isopentenyl-diphosphate Delta-isomerase 1 (IDI1) (Macaca fascicularis (Crab-eating macaque)).